A 487-amino-acid polypeptide reads, in one-letter code: Inosine-5'-monophosphate dehydrogenase (487 aa).

2 consecutive CBS domains span residues 93–152 (VVTE…VTAV) and 153–214 (MTPK…CKDE). NAD(+) contacts are provided by residues D248, 248–250 (DSS), and 298–300 (GIG). K(+)-binding residues include G300 and G302. IMP is bound at residue S303. C305 contributes to the K(+) binding site. C305 functions as the Thioimidate intermediate in the catalytic mechanism. IMP-binding positions include 338 to 340 (DGG), 361 to 362 (GS), and 385 to 389 (YRGMG). The Proton acceptor role is filled by R401. E415 contacts IMP. K(+) contacts are provided by E469, S470, and H471.

This sequence belongs to the IMPDH/GMPR family. Homotetramer. It depends on K(+) as a cofactor.

The catalysed reaction is IMP + NAD(+) + H2O = XMP + NADH + H(+). It participates in purine metabolism; XMP biosynthesis via de novo pathway; XMP from IMP: step 1/1. Its activity is regulated as follows. Mycophenolic acid (MPA) is a non-competitive inhibitor that prevents formation of the closed enzyme conformation by binding to the same site as the amobile flap. In contrast, mizoribine monophosphate (MZP) is a competitive inhibitor that induces the closed conformation. MPA is a potent inhibitor of mammalian IMPDHs but a poor inhibitor of the bacterial enzymes. MZP is a more potent inhibitor of bacterial IMPDH. Functionally, catalyzes the conversion of inosine 5'-phosphate (IMP) to xanthosine 5'-phosphate (XMP), the first committed and rate-limiting step in the de novo synthesis of guanine nucleotides, and therefore plays an important role in the regulation of cell growth. The protein is Inosine-5'-monophosphate dehydrogenase of Yersinia pestis.